A 200-amino-acid chain; its full sequence is Dephospho-CoA kinase (200 aa).

One can recognise a DPCK domain in the interval Val4–Asp200. Position 12 to 17 (Ala12 to Thr17) interacts with ATP.

It belongs to the CoaE family.

It is found in the cytoplasm. The enzyme catalyses 3'-dephospho-CoA + ATP = ADP + CoA + H(+). Its pathway is cofactor biosynthesis; coenzyme A biosynthesis; CoA from (R)-pantothenate: step 5/5. In terms of biological role, catalyzes the phosphorylation of the 3'-hydroxyl group of dephosphocoenzyme A to form coenzyme A. The chain is Dephospho-CoA kinase from Bacillus cereus (strain ATCC 14579 / DSM 31 / CCUG 7414 / JCM 2152 / NBRC 15305 / NCIMB 9373 / NCTC 2599 / NRRL B-3711).